Reading from the N-terminus, the 300-residue chain is Cation-efflux pump FieF (300 aa).

The next 4 helical transmembrane spans lie at 12–32 (AAIA…FAWW), 39–59 (ILAA…NLLV), 82–102 (AALA…LTGI), and 114–134 (PGVG…LVSF). Residues Asp-45 and Asp-49 each coordinate Zn(2+). His-153 and Asp-157 together coordinate Zn(2+). 2 helical membrane passes run 156–176 (SDVM…YGWH) and 178–198 (ADAL…LRMG).

This sequence belongs to the cation diffusion facilitator (CDF) transporter (TC 2.A.4) family. FieF subfamily. Homodimer.

It is found in the cell inner membrane. It catalyses the reaction Zn(2+)(in) + H(+)(out) = Zn(2+)(out) + H(+)(in). It carries out the reaction Cd(2+)(in) + H(+)(out) = Cd(2+)(out) + H(+)(in). The enzyme catalyses Fe(2+)(in) + H(+)(out) = Fe(2+)(out) + H(+)(in). Functionally, divalent metal cation transporter which exports Zn(2+), Cd(2+) and possibly Fe(2+). May be involved in zinc and iron detoxification by efflux. This chain is Cation-efflux pump FieF, found in Escherichia coli O7:K1 (strain IAI39 / ExPEC).